A 251-amino-acid polypeptide reads, in one-letter code: Ribosome maturation factor RimP (251 aa).

Residues 198–251 are disordered; it reads NLGLEPPAAPHAKISEKTTKNTKPKKKPAPTNTKKHRLAAERARRGEIEPDEGD. Positions 217 to 234 are enriched in basic residues; the sequence is KNTKPKKKPAPTNTKKHR. The segment covering 235–245 has biased composition (basic and acidic residues); that stretch reads LAAERARRGEI.

It belongs to the RimP family.

The protein localises to the cytoplasm. In terms of biological role, required for maturation of 30S ribosomal subunits. The polypeptide is Ribosome maturation factor RimP (Bradyrhizobium diazoefficiens (strain JCM 10833 / BCRC 13528 / IAM 13628 / NBRC 14792 / USDA 110)).